A 192-amino-acid polypeptide reads, in one-letter code: MNAIWIAVVAVSLLGLAFGAILGYASRRFAVEDDPVVEKIDEILPQSQCGQCGYPGCRPYAEAIGSQGEKINRCAPGGEAVMLKIATLLNVDPQPIDGDEQEVAPVRMLAVIDENNCIGCTKCIQACPVDAIVGATRAMHTVMSDLCTGCNLCVDPCPTQCIELRPVAETPDSWKWDLNTIPVRIIPVEQHA.

The hydrophobic stretch occupies residues 1-26 (MNAIWIAVVAVSLLGLAFGAILGYAS). Positions 32–91 (EDDPVVEKIDEILPQSQCGQCGYPGCRPYAEAIGSQGEKINRCAPGGEAVMLKIATLLNV) constitute a 4Fe-4S domain. Positions 49, 52, 57, 74, 117, 120, 123, 127, 147, 150, 153, and 157 each coordinate [4Fe-4S] cluster. 4Fe-4S ferredoxin-type domains lie at 108 to 137 (MLAV…GATR) and 138 to 167 (AMHT…LRPV).

The protein belongs to the 4Fe4S bacterial-type ferredoxin family. RnfB subfamily. The complex is composed of six subunits: RnfA, RnfB, RnfC, RnfD, RnfE and RnfG. The cofactor is [4Fe-4S] cluster.

The protein localises to the cell inner membrane. Functionally, part of a membrane-bound complex that couples electron transfer with translocation of ions across the membrane. The protein is Ion-translocating oxidoreductase complex subunit B of Citrobacter koseri (strain ATCC BAA-895 / CDC 4225-83 / SGSC4696).